Consider the following 477-residue polypeptide: Succinate-semialdehyde dehydrogenase [NADP(+)] (477 aa).

Residues 142–143 (WN), 166–169 (KHSE), and 218–219 (GS) each bind NADP(+). Glutamate 240 serves as the catalytic Proton acceptor. Leucine 241 is a binding site for NADP(+). Cysteine 274 (nucleophile) is an active-site residue. Glutamate 371 is a binding site for NADP(+).

Belongs to the aldehyde dehydrogenase family.

The catalysed reaction is succinate semialdehyde + NADP(+) + H2O = succinate + NADPH + 2 H(+). It functions in the pathway amino-acid degradation; 4-aminobutanoate degradation. Catalyzes the NADP(+) dependent oxidation of succinate semialdehyde to succinate. This Deinococcus radiodurans (strain ATCC 13939 / DSM 20539 / JCM 16871 / CCUG 27074 / LMG 4051 / NBRC 15346 / NCIMB 9279 / VKM B-1422 / R1) protein is Succinate-semialdehyde dehydrogenase [NADP(+)] (ssdA).